We begin with the raw amino-acid sequence, 411 residues long: MSRPAHKTDTIVAVDVLVTSPGRNFVALKITTEQGLVGWGDATLNGRELAVASYLRDHVAPLLIGRDPARIEDTWQYLYRGAYWRRGPVTMTSIGAVDLALWDIKGKATGQPVYQLLGGAVRDRILTYTHASGWEIPQLLDAVDERREQGFLAVRAQSGIPGLATVYGVSSGEAGYEPADRGAAPAVEVWDTDSYLRHAPRVLAAVREHVGPELKLLHDAHHRLTPGQAARLGRALEEVDLYWLEDVTPAENQEVLRHIRHHTTVPLAIGEVFNTVWECQTLITEQLIDFVRTCVTHAGGISHLRRIAALAEVWQVRLGPHGPSDVSPVALAASLHVGLATPNFAIQEYMGYEPVVHEVFRHAWSYADGHLHPGDQPGLGVEVDEALAARFPYEPAYLPIARRRDGSMTDW.

Substrate contacts are provided by Asn45 and His130. The active-site Proton donor/acceptor is the Tyr167. Mg(2+) is bound at residue Asp219. His221 functions as the Proton donor/acceptor in the catalytic mechanism. Mg(2+) contacts are provided by Glu245 and Glu271. The substrate site is built by Glu271, Arg292, His321, Asp325, and Glu348.

The protein belongs to the mandelate racemase/muconate lactonizing enzyme family. GalD subfamily. The cofactor is Mg(2+).

It catalyses the reaction D-gluconate = 2-dehydro-3-deoxy-D-gluconate + H2O. Its function is as follows. Has low D-gluconate dehydratase activity (in vitro), suggesting that it has no significant role in D-gluconate degradation in vivo. Has no detectable activity with a panel of 70 other acid sugars (in vitro). The protein is D-galactonate dehydratase family member SBI_01856 of Streptomyces bingchenggensis (strain BCW-1).